Here is a 195-residue protein sequence, read N- to C-terminus: Mannitol operon repressor (195 aa).

The protein belongs to the MtlR/FumE family. Homodimer. Can also form higher level multimer aggregates.

Involved in the repression of the expression of the mannitol mtlADR operon. Does not bind the operator/promoter regulatory region of this operon. Therefore, seems to belong to a new class of transcription factors in bacteria that may regulate gene expression indirectly, perhaps as a part of a larger transcriptional complex. The chain is Mannitol operon repressor from Escherichia coli O6:H1 (strain CFT073 / ATCC 700928 / UPEC).